A 532-amino-acid polypeptide reads, in one-letter code: Bifunctional purine biosynthesis protein PurH (532 aa).

The 147-residue stretch at 1–147 folds into the MGS-like domain; the sequence is MADRPIRQAL…KNHKDVAIVV (147 aa).

This sequence belongs to the PurH family.

It catalyses the reaction (6R)-10-formyltetrahydrofolate + 5-amino-1-(5-phospho-beta-D-ribosyl)imidazole-4-carboxamide = 5-formamido-1-(5-phospho-D-ribosyl)imidazole-4-carboxamide + (6S)-5,6,7,8-tetrahydrofolate. The enzyme catalyses IMP + H2O = 5-formamido-1-(5-phospho-D-ribosyl)imidazole-4-carboxamide. Its pathway is purine metabolism; IMP biosynthesis via de novo pathway; 5-formamido-1-(5-phospho-D-ribosyl)imidazole-4-carboxamide from 5-amino-1-(5-phospho-D-ribosyl)imidazole-4-carboxamide (10-formyl THF route): step 1/1. It functions in the pathway purine metabolism; IMP biosynthesis via de novo pathway; IMP from 5-formamido-1-(5-phospho-D-ribosyl)imidazole-4-carboxamide: step 1/1. In Haemophilus influenzae (strain ATCC 51907 / DSM 11121 / KW20 / Rd), this protein is Bifunctional purine biosynthesis protein PurH.